Reading from the N-terminus, the 518-residue chain is Glutamate--cysteine ligase (518 aa).

Belongs to the glutamate--cysteine ligase type 1 family. Type 1 subfamily.

It catalyses the reaction L-cysteine + L-glutamate + ATP = gamma-L-glutamyl-L-cysteine + ADP + phosphate + H(+). It participates in sulfur metabolism; glutathione biosynthesis; glutathione from L-cysteine and L-glutamate: step 1/2. The chain is Glutamate--cysteine ligase from Salmonella arizonae (strain ATCC BAA-731 / CDC346-86 / RSK2980).